A 721-amino-acid polypeptide reads, in one-letter code: 1,4-alpha-glucan branching enzyme GlgB (721 aa).

The Nucleophile role is filled by Asp-404. Glu-457 acts as the Proton donor in catalysis.

The protein belongs to the glycosyl hydrolase 13 family. GlgB subfamily. In terms of assembly, monomer.

It catalyses the reaction Transfers a segment of a (1-&gt;4)-alpha-D-glucan chain to a primary hydroxy group in a similar glucan chain.. It participates in glycan biosynthesis; glycogen biosynthesis. Its function is as follows. Catalyzes the formation of the alpha-1,6-glucosidic linkages in glycogen by scission of a 1,4-alpha-linked oligosaccharide from growing alpha-1,4-glucan chains and the subsequent attachment of the oligosaccharide to the alpha-1,6 position. The sequence is that of 1,4-alpha-glucan branching enzyme GlgB from Bradyrhizobium diazoefficiens (strain JCM 10833 / BCRC 13528 / IAM 13628 / NBRC 14792 / USDA 110).